We begin with the raw amino-acid sequence, 234 residues long: Synaptogyrin-1 (234 aa).

Met1 carries the N-acetylmethionine modification. At 1–23 the chain is on the cytoplasmic side; sequence MEGGAYGAGKAGGAFDPYTLVRQ. Positions 20–173 constitute an MARVEL domain; the sequence is LVRQPHTILR…QAVLAFQRYQ (154 aa). Residues 24-44 form a helical membrane-spanning segment; sequence PHTILRVVSWVFSIVVFGSIV. Residues 45–71 lie on the Lumenal side of the membrane; it reads NEGYLNNPEEEEEFCIYNRNPNACSYG. Residues 72–92 traverse the membrane as a helical segment; it reads VTVGVLAFLTCLVYLALDVYF. Topologically, residues 93 to 104 are cytoplasmic; that stretch reads PQISSVKDRKKA. Residues 105–125 form a helical membrane-spanning segment; the sequence is VLSDIGVSAFWAFFWFVGFCF. Residues 126 to 148 are Lumenal-facing; sequence LANQWQVSKPKDNPLNEGTDAAR. Residues 149–169 traverse the membrane as a helical segment; the sequence is AAIAFSFFSIFTWAGQAVLAF. Topologically, residues 170 to 234 are cytoplasmic; that stretch reads QRYQIGADSA…EPQGYQSQGY (65 aa). The disordered stretch occupies residues 201–234; sequence EPSAGSDPTGMGGTYQHPANAFDAEPQGYQSQGY.

This sequence belongs to the synaptogyrin family. In terms of tissue distribution, nervous system (at protein level).

Its subcellular location is the cytoplasmic vesicle. The protein resides in the secretory vesicle. The protein localises to the synaptic vesicle membrane. It is found in the melanosome. In terms of biological role, may play a role in regulated exocytosis. Modulates the localization of synaptophysin/SYP into synaptic-like microvesicles and may therefore play a role in synaptic-like microvesicle formation and/or maturation. Involved in the regulation of short-term and long-term synaptic plasticity. This Rattus norvegicus (Rat) protein is Synaptogyrin-1.